The following is a 650-amino-acid chain: Acetyl-coenzyme A synthetase (650 aa).

CoA-binding positions include 191 to 194, threonine 311, and asparagine 335; that span reads RAGR. Residues 387 to 389, 411 to 416, aspartate 500, and arginine 515 each bind ATP; these read GEP and DTWWQT. Serine 523 is a binding site for CoA. Residue arginine 526 participates in ATP binding. The Mg(2+) site is built by valine 537, histidine 539, and valine 542. Arginine 584 is a binding site for CoA. The residue at position 609 (lysine 609) is an N6-acetyllysine.

This sequence belongs to the ATP-dependent AMP-binding enzyme family. The cofactor is Mg(2+). Acetylated. Deacetylation by the SIR2-homolog deacetylase activates the enzyme.

It catalyses the reaction acetate + ATP + CoA = acetyl-CoA + AMP + diphosphate. In terms of biological role, catalyzes the conversion of acetate into acetyl-CoA (AcCoA), an essential intermediate at the junction of anabolic and catabolic pathways. AcsA undergoes a two-step reaction. In the first half reaction, AcsA combines acetate with ATP to form acetyl-adenylate (AcAMP) intermediate. In the second half reaction, it can then transfer the acetyl group from AcAMP to the sulfhydryl group of CoA, forming the product AcCoA. This Shewanella pealeana (strain ATCC 700345 / ANG-SQ1) protein is Acetyl-coenzyme A synthetase.